Consider the following 168-residue polypeptide: T-cell surface glycoprotein CD3 delta chain (168 aa).

Positions 1–21 are cleaved as a signal peptide; that stretch reads MEHSRFLSCLILAALLSQVNP. The Extracellular portion of the chain corresponds to 22 to 102; sequence RILKVLEPED…CVELDTATLA (81 aa). A disulfide bridge links C37 with C74. N-linked (GlcNAc...) asparagine glycosylation is found at N38 and N56. Residues 103 to 123 traverse the membrane as a helical segment; the sequence is GMIITDIIATVLLALGVYCFA. Residues 124 to 168 lie on the Cytoplasmic side of the membrane; it reads GHETGRFSRAADTQALMGNDQLYQPLRERNDAQYSRLGDKWARNK. Residues 135-163 enclose the ITAM domain; that stretch reads DTQALMGNDQLYQPLRERNDAQYSRLGDK. A phosphotyrosine mark is found at Y146 and Y157.

In terms of assembly, the TCR-CD3 complex is composed of a CD3D/CD3E and a CD3G/CD3E heterodimers that preferentially associate with TCRalpha and TCRbeta, respectively, to form TCRalpha/CD3E/CD3G and TCRbeta/CD3G/CD3E trimers. In turn, the hexamer interacts with CD3Z homodimer to form the TCR-CD3 complex. Alternatively, TCRalpha and TCRbeta can be replaced by TCRgamma and TCRdelta. Interacts with coreceptors CD4 and CD8. Post-translationally, phosphorylated on Tyr residues after T-cell receptor triggering by LCK in association with CD4/CD8. As to expression, CD3D is mostly present on T-lymphocytes with its TCR-CD3 partners. Present also in fetal NK-cells.

The protein resides in the cell membrane. In terms of biological role, part of the TCR-CD3 complex present on T-lymphocyte cell surface that plays an essential role in adaptive immune response. When antigen presenting cells (APCs) activate T-cell receptor (TCR), TCR-mediated signals are transmitted across the cell membrane by the CD3 chains CD3D, CD3E, CD3G and CD3Z. All CD3 chains contain immunoreceptor tyrosine-based activation motifs (ITAMs) in their cytoplasmic domain. Upon TCR engagement, these motifs become phosphorylated by Src family protein tyrosine kinases LCK and FYN, resulting in the activation of downstream signaling pathways. In addition of this role of signal transduction in T-cell activation, CD3D plays an essential role in thymocyte differentiation. Indeed, participates in correct intracellular TCR-CD3 complex assembly and surface expression. In absence of a functional TCR-CD3 complex, thymocytes are unable to differentiate properly. Interacts with CD4 and CD8 and thus serves to establish a functional link between the TCR and coreceptors CD4 and CD8, which is needed for activation and positive selection of CD4 or CD8 T-cells. This Bos taurus (Bovine) protein is T-cell surface glycoprotein CD3 delta chain (CD3D).